We begin with the raw amino-acid sequence, 72 residues long: uncharacterized protein (72 aa).

This is an uncharacterized protein from Rickettsia conorii (strain ATCC VR-613 / Malish 7).